The sequence spans 421 residues: MAFFAGISDWVAQRLQRNSETARLDLERAYEAALYITALETEYASGRSLRRLPSQLSARQQTSLQAELRQTLRSLRHYRQRYRRHQPVQLQAGLALGRPGMGMPTIAHEKLQLIEQVLARYGQPTVHSSNPDDSQLMTSKNNSKPVPDPESDDEYLISQTSFLPRSIFGAFADLRQQLDPKAEDQIVQNFRSRKGKTLIALRFVLLLVLVPLLTQQISKSFIVGPIVDRLRSQDPEAIFLNFQMEEEAFVKLNQYQQLLRFQHYLKEAPPLTEAEIDERVREKAEEIAVEYRQESSNAIKNIFADLISAAAFAILLISSQEEIQLLKSFIDEVVYGISDSAKAFIIILFTDIFVGFHSPHGWEVILESISRHFGIPENRSFIFLFIATFPVILDTIFKYWIFRYLNRISPSAVATYRNMNE.

The tract at residues 124–153 (PTVHSSNPDDSQLMTSKNNSKPVPDPESDD) is disordered. Residues 125 to 144 (TVHSSNPDDSQLMTSKNNSK) are compositionally biased toward polar residues. The next 4 membrane-spanning stretches (helical) occupy residues 203 to 223 (FVLL…SFIV), 298 to 318 (AIKN…LLIS), 345 to 365 (IIIL…WEVI), and 381 to 401 (FIFL…KYWI).

The protein belongs to the CemA family.

The protein localises to the cell inner membrane. In terms of biological role, required for H(+) efflux immediately after light irradiation to form a rapid H(+) concentration gradient across the thylakoid membranes. Together with PxcL, contributes to transient H(+) uptake following dark to light transition. This Synechococcus sp. (strain ATCC 27144 / PCC 6301 / SAUG 1402/1) (Anacystis nidulans) protein is Proton extrusion protein PxcA.